A 568-amino-acid polypeptide reads, in one-letter code: Urease subunit beta (568 aa).

A Urease domain is found at 131–568; that stretch reads GGIDTHIHFI…LSLAQLYNLF (438 aa). Positions 136, 138, and 219 each coordinate Ni(2+). Residue lysine 219 is modified to N6-carboxylysine. Histidine 221 serves as a coordination point for substrate. Positions 248 and 274 each coordinate Ni(2+). The active-site Proton donor is the histidine 321. Aspartate 361 contributes to the Ni(2+) binding site.

It belongs to the metallo-dependent hydrolases superfamily. Urease alpha subunit family. Heterohexamer of 3 UreA (alpha) and 3 UreB (beta) subunits. Requires Ni cation as cofactor. In terms of processing, carboxylation allows a single lysine to coordinate two nickel ions.

The protein resides in the cytoplasm. The enzyme catalyses urea + 2 H2O + H(+) = hydrogencarbonate + 2 NH4(+). Its pathway is nitrogen metabolism; urea degradation; CO(2) and NH(3) from urea (urease route): step 1/1. The sequence is that of Urease subunit beta from Helicobacter heilmannii.